A 440-amino-acid chain; its full sequence is Xylose isomerase (440 aa).

Residues Asp307 and Asp309 each contribute to the Mg(2+) site.

The protein belongs to the xylose isomerase family. As to quaternary structure, homotetramer. It depends on Mg(2+) as a cofactor.

The protein localises to the cytoplasm. It carries out the reaction alpha-D-xylose = alpha-D-xylulofuranose. The polypeptide is Xylose isomerase (Pectobacterium carotovorum subsp. carotovorum (strain PC1)).